The chain runs to 322 residues: DNA repair and recombination protein RadA (322 aa).

105–112 (GMFGSGKT) serves as a coordination point for ATP.

The protein belongs to the eukaryotic RecA-like protein family.

Involved in DNA repair and in homologous recombination. Binds and assemble on single-stranded DNA to form a nucleoprotein filament. Hydrolyzes ATP in a ssDNA-dependent manner and promotes DNA strand exchange between homologous DNA molecules. In Methanococcus maripaludis (Methanococcus deltae), this protein is DNA repair and recombination protein RadA.